A 340-amino-acid polypeptide reads, in one-letter code: N-acetyl-gamma-glutamyl-phosphate reductase (340 aa).

The active site involves cysteine 146.

It belongs to the NAGSA dehydrogenase family. Type 1 subfamily.

It localises to the cytoplasm. It catalyses the reaction N-acetyl-L-glutamate 5-semialdehyde + phosphate + NADP(+) = N-acetyl-L-glutamyl 5-phosphate + NADPH + H(+). It functions in the pathway amino-acid biosynthesis; L-arginine biosynthesis; N(2)-acetyl-L-ornithine from L-glutamate: step 3/4. Functionally, catalyzes the NADPH-dependent reduction of N-acetyl-5-glutamyl phosphate to yield N-acetyl-L-glutamate 5-semialdehyde. This Streptococcus gordonii (strain Challis / ATCC 35105 / BCRC 15272 / CH1 / DL1 / V288) protein is N-acetyl-gamma-glutamyl-phosphate reductase.